Here is a 113-residue protein sequence, read N- to C-terminus: Mitochondrial import inner membrane translocase subunit PAM16 like 1 (113 aa).

The transit peptide at 1–48 (MAARVLASVIVMGSGIIARACTQAYRQALANASKTGVAHEATQTIKRG) directs the protein to the mitochondrion. The J-like stretch occupies residues 55 to 104 (EARQILGVTEKSSWDEILKKYDTLFERNAQNGSFYLQSKVHRAKECLETA).

It belongs to the TIM16/PAM16 family. As to expression, expressed at low levels in seedlings, rosettes and inflorescence.

Its subcellular location is the mitochondrion inner membrane. Regulates ATP-dependent protein translocation into the mitochondrial matrix. This Arabidopsis thaliana (Mouse-ear cress) protein is Mitochondrial import inner membrane translocase subunit PAM16 like 1.